A 180-amino-acid polypeptide reads, in one-letter code: ATP-dependent protease subunit HslV (180 aa).

Residue Thr2 is part of the active site. 3 residues coordinate Na(+): Gly157, Cys160, and Thr163.

The protein belongs to the peptidase T1B family. HslV subfamily. A double ring-shaped homohexamer of HslV is capped on each side by a ring-shaped HslU homohexamer. The assembly of the HslU/HslV complex is dependent on binding of ATP.

It localises to the cytoplasm. It carries out the reaction ATP-dependent cleavage of peptide bonds with broad specificity.. With respect to regulation, allosterically activated by HslU binding. Functionally, protease subunit of a proteasome-like degradation complex believed to be a general protein degrading machinery. The chain is ATP-dependent protease subunit HslV from Tolumonas auensis (strain DSM 9187 / NBRC 110442 / TA 4).